The chain runs to 1317 residues: Immunoglobulin superfamily member 1 (1317 aa).

The N-terminal stretch at 1–20 is a signal peptide; it reads MMLRTFTLLLLCIWLNPGMT. 5 Ig-like C2-type domains span residues 21–112, 114–211, 216–302, 311–398, and 400–481; these read SLAV…KILE, EAPG…KLVV, PKPT…SDIL, PKTW…ATYN, and VELM…HRSK. Residues 21–499 are Extracellular-facing; it reads SLAVESQPEL…GFLTWNSILN (479 aa). N-linked (GlcNAc...) asparagine glycosylation is present at asparagine 43. Cysteine 48 and cysteine 96 are joined by a disulfide. A disulfide bridge links cysteine 238 with cysteine 286. N-linked (GlcNAc...) asparagine glycans are attached at residues asparagine 328 and asparagine 371. 2 disulfide bridges follow: cysteine 333/cysteine 382 and cysteine 422/cysteine 465. A helical membrane pass occupies residues 500-520; that stretch reads EAVRVSLTMQLASLLLLVVWI. Residues 521 to 531 are Cytoplasmic-facing; it reads RWKCRRLRLRE. Residues 532-552 traverse the membrane as a helical segment; that stretch reads AWLLGTAQGVAMLFILMALLC. At 553–1317 the chain is on the extracellular side; sequence CGLCNGALTE…EVSVELTVPI (765 aa). 7 consecutive Ig-like C2-type domains span residues 570–658, 659–753, 758–850, 854–938, 946–1041, 1046–1131, and 1142–1223; these read TPKP…ALEL, VGTD…ELVI, PKPF…LVVT, PKPT…SSLS, TDTF…ELIV, PKPS…NHSN, and PKPS…EPSD. Cysteines 780 and 830 form a disulfide. A glycan (N-linked (GlcNAc...) asparagine) is linked at asparagine 871. Cysteines 876 and 923 form a disulfide. 2 N-linked (GlcNAc...) asparagine glycosylation sites follow: asparagine 967 and asparagine 1063. 2 disulfides stabilise this stretch: cysteine 1068–cysteine 1115 and cysteine 1164–cysteine 1207. The interval 1290 to 1310 is disordered; it reads NQEGEPGTTTNSPSSASQEVS. Over residues 1296–1309 the composition is skewed to polar residues; it reads GTTTNSPSSASQEV.

Interacts with INHA; the interaction is not confirmed by standard receptor binding assays. Interacts with ACVR1B; the interaction appears to be ligand-dependent as it is diminished by inhibin B and activin A. Interacts with ACVR2A, ACVR2B, ACVRL1 and BMPR1B. Interacts with HECTD1.

The protein resides in the membrane. The protein localises to the secreted. In terms of biological role, seems to be a coreceptor in inhibin signaling, but seems not to be a high-affinity inhibin receptor. Antagonizes activin A signaling in the presence or absence of inhibin B. Necessary to mediate a specific antagonistic effect of inhibin B on activin-stimulated transcription. The chain is Immunoglobulin superfamily member 1 (Igsf1) from Mus musculus (Mouse).